The chain runs to 158 residues: Endoribonuclease YbeY (158 aa).

Residues His119, His123, and Asp129 each coordinate Zn(2+).

The protein belongs to the endoribonuclease YbeY family. The cofactor is Zn(2+).

The protein localises to the cytoplasm. Its function is as follows. Single strand-specific metallo-endoribonuclease involved in late-stage 70S ribosome quality control and in maturation of the 3' terminus of the 16S rRNA. This Chlamydia caviae (strain ATCC VR-813 / DSM 19441 / 03DC25 / GPIC) (Chlamydophila caviae) protein is Endoribonuclease YbeY.